A 351-amino-acid chain; its full sequence is MLKNDLFLRALKRQPCSRTPIWVMRQAGRYLPEYRAVREKTDFLTLCKTPELAAEVTIQPVDLMGVDAAIIFSDILVINEAMGMNVEIIETKGIKLSPVIRSKADIDKLIVPDIDEKLGYVMDALRLTKKELDNRVPLIGFSGAAWTLFTYAVEGGGSKNYAFAKKMMYREPQMAHLLLGKISETISAYLLKQVEAGADAIQIFDSWASALSEDDYREFALPYIKQNVQAVKAKYPDIPVIVFSKDCNTILSDIADTGCDAMGLGWGIDIAKARAELKDRVALQGNLDPTVLYGTPEKIKSEAAKVLKQFGQHTESSGHVFNLGHGILPDVDPANLKLLVEFVKEESARYH.

Substrate is bound by residues 25–29 (RQAGR), Asp74, Tyr151, Ser206, and His325.

Belongs to the uroporphyrinogen decarboxylase family. Homodimer.

The protein resides in the cytoplasm. The enzyme catalyses uroporphyrinogen III + 4 H(+) = coproporphyrinogen III + 4 CO2. It functions in the pathway porphyrin-containing compound metabolism; protoporphyrin-IX biosynthesis; coproporphyrinogen-III from 5-aminolevulinate: step 4/4. In terms of biological role, catalyzes the decarboxylation of four acetate groups of uroporphyrinogen-III to yield coproporphyrinogen-III. This chain is Uroporphyrinogen decarboxylase, found in Chlorobium limicola (strain DSM 245 / NBRC 103803 / 6330).